A 497-amino-acid chain; its full sequence is PHD finger protein 10 (497 aa).

The segment covering 1-13 (MTAAGPGAAPSPG) has biased composition (low complexity). Positions 1-61 (MTAAGPGAAP…SSRSCETSSQ (61 aa)) are disordered. Ser-11, Ser-35, and Ser-49 each carry phosphoserine. An essential to induce neural progenitor proliferation region spans residues 88–184 (MLQEQVSEYL…HYKEYSQMQQ (97 aa)). The tract at residues 88–294 (MLQEQVSEYL…PPLDPELPAL (207 aa)) is SAY. Residue Lys-240 forms a Glycyl lysine isopeptide (Lys-Gly) (interchain with G-Cter in SUMO2) linkage. At Ser-269 the chain carries Phosphoserine. Residues 284-295 (EPPLDPELPALD) show a composition bias toward low complexity. The tract at residues 284–368 (EPPLDPELPA…RSVLSKSAPG (85 aa)) is disordered. The interval 291–333 (LPALDSDGDSDDGEDGGGDEKRKNKGTSDSSSGNVSEGDSPPD) is essential to induce neural progenitor proliferation. Phosphoserine is present on residues Ser-296, Ser-300, Ser-326, and Ser-330. Positions 296–307 (SDGDSDDGEDGG) are enriched in acidic residues. Positions 317-327 (TSDSSSGNVSE) are enriched in polar residues. The segment covering 337-358 (DTFHGRQKSKDKMATPRKDGSK) has biased composition (basic and acidic residues). The PHD-type 1; degenerate zinc finger occupies 378–435 (LCGICLKGKESNKKGKAESLIHCSQCDNSGHPSCLDMTMELVSMIKTYPWQCMECKTC). Residue Lys-384 forms a Glycyl lysine isopeptide (Lys-Gly) (interchain with G-Cter in SUMO2) linkage. The PHD-type 2; degenerate zinc finger occupies 437–480 (ICGQPHHEEEMMFCDVCDRGYHTFCVGLGAIPSGRWICDCCQRA).

This sequence belongs to the SAYP family. As to quaternary structure, component of neural progenitors-specific chromatin remodeling complex (npBAF complex) composed of at least, ARID1A/BAF250A or ARID1B/BAF250B, SMARCD1/BAF60A, SMARCD3/BAF60C, SMARCA2/BRM/BAF190B, SMARCA4/BRG1/BAF190A, SMARCB1/BAF47, SMARCC1/BAF155, SMARCE1/BAF57, SMARCC2/BAF170, PHF10/BAF45A, ACTL6A/BAF53A and actin. Interacts with ACTL6A/BAF53A, SMARCA2/BRM/BAF190B, SMARCA4/BRG1/BAF190A and PBRM1/BAF180. In terms of tissue distribution, widely expressed. Expressed selectively in neural stem and progenitor cells (at protein level).

It is found in the nucleus. In terms of biological role, involved in transcription activity regulation by chromatin remodeling. Belongs to the neural progenitors-specific chromatin remodeling complex (npBAF complex) and is required for the proliferation of neural progenitors. During neural development a switch from a stem/progenitor to a post-mitotic chromatin remodeling mechanism occurs as neurons exit the cell cycle and become committed to their adult state. The transition from proliferating neural stem/progenitor cells to post-mitotic neurons requires a switch in subunit composition of the npBAF and nBAF complexes. As neural progenitors exit mitosis and differentiate into neurons, npBAF complexes which contain ACTL6A/BAF53A and PHF10/BAF45A, are exchanged for homologous alternative ACTL6B/BAF53B and DPF1/BAF45B or DPF3/BAF45C subunits in neuron-specific complexes (nBAF). The npBAF complex is essential for the self-renewal/proliferative capacity of the multipotent neural stem cells. The nBAF complex along with CREST plays a role regulating the activity of genes essential for dendrite growth. The polypeptide is PHD finger protein 10 (Phf10) (Mus musculus (Mouse)).